The primary structure comprises 169 residues: METGPSEEPSGRKESQEMCPPGLLVFAGSSEQDANLAKQFWISASMYPPSESQLVLRRDSSQRLPVARPRRSRGSENSHSSQSFHLASNKNRDIFAEALKIQESEEKVKYLQKAKTREEILQLLRKQREERISKELISLPYKPKAKEHKAKKVVSESDKEDQEEVKTLD.

Disordered regions lie at residues 1–21, 52–89, and 144–169; these read METG…MCPP, SQLV…LASN, and KAKE…KTLD. The segment covering 75-89 has biased composition (polar residues); the sequence is SENSHSSQSFHLASN.

The protein belongs to the HOATZ family.

The protein localises to the cytoplasm. It is found in the cell projection. The protein resides in the cilium. Its function is as follows. Required for motile ciliogenesis and flagellar genesis by mediating the maturation of the glycolytic enzyme ENO4. This Homo sapiens (Human) protein is Cilia- and flagella-associated protein HOATZ.